We begin with the raw amino-acid sequence, 394 residues long: Elongation factor Tu (394 aa).

A tr-type G domain is found at 10 to 204 (KPHINVGTIG…SLDKYIPIPV (195 aa)). The interval 19-26 (GHVDHGKT) is G1. 19–26 (GHVDHGKT) provides a ligand contact to GTP. A Mg(2+)-binding site is contributed by Thr26. The interval 60 to 64 (GITIN) is G2. The tract at residues 81–84 (DCPG) is G3. Residues 81–85 (DCPGH) and 136–139 (NKCD) each bind GTP. Residues 136–139 (NKCD) are G4. The segment at 174–176 (SAL) is G5.

The protein belongs to the TRAFAC class translation factor GTPase superfamily. Classic translation factor GTPase family. EF-Tu/EF-1A subfamily. In terms of assembly, monomer.

The protein localises to the cytoplasm. The enzyme catalyses GTP + H2O = GDP + phosphate + H(+). GTP hydrolase that promotes the GTP-dependent binding of aminoacyl-tRNA to the A-site of ribosomes during protein biosynthesis. The sequence is that of Elongation factor Tu from Buchnera aphidicola subsp. Cinara cedri (strain Cc).